Consider the following 135-residue polypeptide: Interleukin-5 (135 aa).

The signal sequence occupies residues 1 to 19; the sequence is MRVLLQLGLLALGAVCVCA. N-linked (GlcNAc...) asparagine glycans are attached at residues Asn-48, Asn-77, and Asn-91.

This sequence belongs to the IL-5 family. Homodimer; disulfide-linked. Interacts with IL5RA. Interacts with CSF2RB.

Its subcellular location is the secreted. Homodimeric cytokine expressed predominantly by T-lymphocytes and NK cells that plays an important role in the survival, differentiation, and chemotaxis of eosinophils. Also acts on activated and resting B-cells to induce immunoglobulin production, growth, and differentiation. Mechanistically, exerts its biological effects through a receptor composed of IL5RA subunit and the cytokine receptor common subunit beta/CSF2RB. Binding to the receptor leads to activation of various kinases including LYN, SYK and JAK2 and thereby propagates signals through the RAS-MAPK and JAK-STAT5 pathways respectively. In Cavia porcellus (Guinea pig), this protein is Interleukin-5 (IL5).